Consider the following 90-residue polypeptide: DNA-binding protein HU-alpha (90 aa).

The protein belongs to the bacterial histone-like protein family. Heterodimer of an alpha and a beta chain.

Histone-like DNA-binding protein which is capable of wrapping DNA to stabilize it, and thus to prevent its denaturation under extreme environmental conditions. This Vibrio proteolyticus (Aeromonas proteolytica) protein is DNA-binding protein HU-alpha (hupA).